We begin with the raw amino-acid sequence, 304 residues long: uncharacterized protein (304 aa).

Helical transmembrane passes span 5–25 (TIIL…FIAI), 42–62 (FLLA…PLLF), 68–88 (IFQL…ILYG), 96–116 (IASV…FIFF), 120–140 (LYFF…IILF), 150–170 (TIKG…IYLY), 178–198 (ISIL…FLVI), 215–235 (ILAT…SYFY), 245–265 (ASTI…FVWG), and 268–288 (IGID…ITIF). 2 consecutive EamA domains span residues 16 to 140 (ITWG…IILF) and 162 to 288 (TSHA…ITIF).

Belongs to the EamA transporter family.

Its subcellular location is the cell membrane. This is an uncharacterized protein from Buchnera aphidicola subsp. Schlechtendalia chinensis.